The sequence spans 156 residues: Arginine repressor (156 aa).

Belongs to the ArgR family.

Its subcellular location is the cytoplasm. Its pathway is amino-acid biosynthesis; L-arginine biosynthesis [regulation]. Its function is as follows. Regulates arginine biosynthesis genes. This Aeromonas hydrophila subsp. hydrophila (strain ATCC 7966 / DSM 30187 / BCRC 13018 / CCUG 14551 / JCM 1027 / KCTC 2358 / NCIMB 9240 / NCTC 8049) protein is Arginine repressor.